The chain runs to 859 residues: Magnesium transporter ALR1 (859 aa).

The segment covering 1–20 (MSSSSSSSESSPNLSRSNSL) has biased composition (low complexity). Disordered regions lie at residues 1-281 (MSSS…MPPQ) and 330-399 (TSST…NIPS). At Ser2 the chain carries N-acetylserine. Composition is skewed to basic and acidic residues over residues 28-42 (KTED…RQHP) and 55-73 (KNKE…EQKS). At Tyr77 the chain carries Phosphotyrosine. Ser85 is modified (phosphoserine). Residues 144–154 (PPKDVGVKRDY) are compositionally biased toward basic and acidic residues. Residues 157-176 (SSSTASSGNKSKLSASSSAS) are compositionally biased toward low complexity. A phosphoserine mark is found at Ser185 and Ser188. A compositionally biased stretch (basic and acidic residues) spans 193-203 (IPHESKSDTHS). The segment covering 213–235 (YSTTSAHSSINPAVLLTKSTSQK) has biased composition (polar residues). Ser220, Ser221, and Ser236 each carry phosphoserine. At Thr242 the chain carries Phosphothreonine. Residues 252 to 265 (TRASFDSDVSQASR) show a composition bias toward polar residues. Residues 330–339 (TSSTSTSGSS) show a composition bias toward low complexity. The span at 353–375 (EKSESTNETEIHEKKEDEHEKIK) shows a compositional bias: basic and acidic residues. A run of 2 helical transmembrane segments spans residues 744-764 (TMIG…GMNV) and 773-793 (IAWW…GWFL). The interval 830–859 (FNDRSKNINVRAGPSNKSVASLPSRYSRYD) is disordered. Ser850 carries the phosphoserine modification.

This sequence belongs to the CorA metal ion transporter (MIT) (TC 1.A.35) family.

The protein resides in the cell membrane. Plasma membrane magnesium transporter. This chain is Magnesium transporter ALR1 (ALR1), found in Saccharomyces cerevisiae (strain ATCC 204508 / S288c) (Baker's yeast).